A 494-amino-acid chain; its full sequence is Nuclear distribution protein PAC1 (494 aa).

The LisH domain maps to Gln14–Arg46. Residues Asn90–Leu123 adopt a coiled-coil conformation. WD repeat units follow at residues Asn153–Ala192, Ser196–Gln244, Gly251–Thr292, Pro295–Thr334, His347–His395, Gly415–Glu454, and His457–Phe492.

The protein belongs to the WD repeat LIS1/nudF family. Self-associates. Interacts with NDL1 and dynein.

Its subcellular location is the cytoplasm. The protein localises to the cytoskeleton. It is found in the spindle pole. Functionally, positively regulates the activity of the minus-end directed microtubule motor protein dynein. Plays a central role in positioning the mitotic spindle at the bud neck during cell division. Targets cytoplasmic dynein to microtubule plus ends, thereby promoting dynein-mediated microtubule sliding along the bud cortex and consequently the movement of the mitotic spindle to the bud neck. The sequence is that of Nuclear distribution protein PAC1 from Saccharomyces cerevisiae (strain RM11-1a) (Baker's yeast).